The chain runs to 361 residues: tRNA/tmRNA (uracil-C(5))-methyltransferase (361 aa).

S-adenosyl-L-methionine contacts are provided by Gln-183, Tyr-211, Asn-216, Glu-232, and Asp-294. The Nucleophile role is filled by Cys-319. The Proton acceptor role is filled by Glu-353.

Belongs to the class I-like SAM-binding methyltransferase superfamily. RNA M5U methyltransferase family. TrmA subfamily.

The enzyme catalyses uridine(54) in tRNA + S-adenosyl-L-methionine = 5-methyluridine(54) in tRNA + S-adenosyl-L-homocysteine + H(+). The catalysed reaction is uridine(341) in tmRNA + S-adenosyl-L-methionine = 5-methyluridine(341) in tmRNA + S-adenosyl-L-homocysteine + H(+). In terms of biological role, dual-specificity methyltransferase that catalyzes the formation of 5-methyluridine at position 54 (m5U54) in all tRNAs, and that of position 341 (m5U341) in tmRNA (transfer-mRNA). The chain is tRNA/tmRNA (uracil-C(5))-methyltransferase from Acinetobacter baumannii (strain ACICU).